A 982-amino-acid chain; its full sequence is Presequence protease, mitochondrial (982 aa).

Residues 1–7 constitute a mitochondrion transit peptide; it reads MFQIRNY. Position 84 (His84) interacts with Zn(2+). Glu87 functions as the Proton acceptor in the catalytic mechanism. His88 is a binding site for Zn(2+). Glu160 is a catalytic residue. Residue Glu185 coordinates Zn(2+).

This sequence belongs to the peptidase M16 family. PreP subfamily. Monomer and homodimer; homodimerization is induced by binding of the substrate. Requires Zn(2+) as cofactor.

The protein resides in the mitochondrion intermembrane space. The protein localises to the mitochondrion matrix. Degrades mitochondrial transit peptides after their cleavage in the intermembrane space or in the matrix, and presequence peptides; clearance of these peptides is required to keep the presequence processing machinery running. Preferentially cleaves the N-terminal side of paired basic amino acid residues. Also degrades other unstructured peptides. May function as an ATP-dependent peptidase as opposed to a metalloendopeptidase. The sequence is that of Presequence protease, mitochondrial (CYM1) from Kluyveromyces lactis (strain ATCC 8585 / CBS 2359 / DSM 70799 / NBRC 1267 / NRRL Y-1140 / WM37) (Yeast).